The sequence spans 226 residues: HTH-type transcriptional regulator TcmR (226 aa).

The span at Met1–Asn16 shows a compositional bias: polar residues. The tract at residues Met1–Leu25 is disordered. The HTH tetR-type domain occupies Arg26–Phe86. A DNA-binding region (H-T-H motif) is located at residues Thr49–Phe68.

Its pathway is antibiotic biosynthesis; tetracenomycin C biosynthesis. Represses transcription of the divergently oriented tcmR and tcmA (tetracenomycin C resistance and export) genes by binding to an intergenic operator region. This binding is inhibited by tetracenomycin C. This Streptomyces glaucescens protein is HTH-type transcriptional regulator TcmR (tcmR).